We begin with the raw amino-acid sequence, 285 residues long: Tropomyosin alpha-3 chain (285 aa).

Residues 1-285 (MMEAIKKKMQ…DHALNDMTSI (285 aa)) are a coiled coil. An N-acetylmethionine modification is found at Met-2. An N-acetylalanine modification is found at Met-2. Positions 16–41 (KENALDRAEQAEAEQKQAEERSKQLE) are enriched in basic and acidic residues. A disordered region spans residues 16 to 44 (KENALDRAEQAEAEQKQAEERSKQLEDEL). The residue at position 54 (Thr-54) is a Phosphothreonine. Phosphoserine occurs at positions 62 and 88. Residue Thr-109 is modified to Phosphothreonine. An N6-acetyllysine mark is found at Glu-125 and Leu-177. Ser-207 is subject to Phosphoserine. Position 215 is an N6-acetyllysine (Tyr-215). Ser-216 bears the Phosphoserine mark. Thr-253 carries the post-translational modification Phosphothreonine. Phosphotyrosine is present on Tyr-262. A Phosphoserine modification is found at Ser-272. Thr-283 is subject to Phosphothreonine. A Phosphoserine modification is found at Ser-284.

This sequence belongs to the tropomyosin family. As to quaternary structure, homodimer. Heterodimer of an alpha (TPM1, TPM3 or TPM4) and a beta (TPM2) chain. Interacts with TMOD1. Interacts with TNNT1.

It localises to the cytoplasm. The protein resides in the cytoskeleton. Functionally, binds to actin filaments in muscle and non-muscle cells. Plays a central role, in association with the troponin complex, in the calcium dependent regulation of vertebrate striated muscle contraction. Smooth muscle contraction is regulated by interaction with caldesmon. In non-muscle cells is implicated in stabilizing cytoskeleton actin filaments. This is Tropomyosin alpha-3 chain (TPM3) from Homo sapiens (Human).